The chain runs to 340 residues: Phosphatidylglycerol--prolipoprotein diacylglyceryl transferase (340 aa).

4 helical membrane passes run 19–39, 54–74, 93–113, and 119–139; these read IPLRGYAFCIIIGVFVAVWLG, ADIAVWAVPFGLVGGRLYHVI, IWEGGLGIWGAIALGAVGAWI, and GIPLPAWADAVAPGIAFAQAF. Residue R141 coordinates a 1,2-diacyl-sn-glycero-3-phospho-(1'-sn-glycerol). A run of 3 helical transmembrane segments spans residues 176–196, 202–221, and 238–258; these read HPTFLYESLWCVGVGFLVIWA, LGHGRAFALYVAAYCVGRAW, and LNDWTAIAVFLLAVLYIVLSS. The segment at 266–340 is disordered; it reads EIVEPGASDT…ESAAESAKKV (75 aa). The segment covering 284-294 has biased composition (basic and acidic residues); the sequence is DLGKDEDKATT. Residues 295–307 show a composition bias toward low complexity; the sequence is DKATATDTSTTTD. A compositionally biased stretch (basic and acidic residues) spans 326 to 340; it reads PSEKTESAAESAKKV.

The protein belongs to the Lgt family.

The protein localises to the cell membrane. The enzyme catalyses L-cysteinyl-[prolipoprotein] + a 1,2-diacyl-sn-glycero-3-phospho-(1'-sn-glycerol) = an S-1,2-diacyl-sn-glyceryl-L-cysteinyl-[prolipoprotein] + sn-glycerol 1-phosphate + H(+). Its pathway is protein modification; lipoprotein biosynthesis (diacylglyceryl transfer). Its function is as follows. Catalyzes the transfer of the diacylglyceryl group from phosphatidylglycerol to the sulfhydryl group of the N-terminal cysteine of a prolipoprotein, the first step in the formation of mature lipoproteins. The chain is Phosphatidylglycerol--prolipoprotein diacylglyceryl transferase from Streptomyces avermitilis (strain ATCC 31267 / DSM 46492 / JCM 5070 / NBRC 14893 / NCIMB 12804 / NRRL 8165 / MA-4680).